The primary structure comprises 619 residues: Putative zinc metalloprotease CT_072 (619 aa).

Histidine 20 lines the Zn(2+) pocket. Glutamate 21 is an active-site residue. Histidine 24 contributes to the Zn(2+) binding site. Helical transmembrane passes span 103–125 (IFVL…GILY), 558–580 (VLNL…WEIL), and 593–610 (ALVP…FLTL).

The protein belongs to the peptidase M50B family. Requires Zn(2+) as cofactor.

It is found in the cell inner membrane. The polypeptide is Putative zinc metalloprotease CT_072 (Chlamydia trachomatis serovar D (strain ATCC VR-885 / DSM 19411 / UW-3/Cx)).